A 100-amino-acid chain; its full sequence is NAD(P)H-quinone oxidoreductase subunit 4L, chloroplastic (100 aa).

3 helical membrane-spanning segments follow: residues 1–21, 29–49, and 63–83; these read MLEH…YGLI, ALMC…TFSN, and IFVT…ALAI.

It belongs to the complex I subunit 4L family. In terms of assembly, NDH is composed of at least 16 different subunits, 5 of which are encoded in the nucleus.

The protein localises to the plastid. It localises to the chloroplast thylakoid membrane. The enzyme catalyses a plastoquinone + NADH + (n+1) H(+)(in) = a plastoquinol + NAD(+) + n H(+)(out). The catalysed reaction is a plastoquinone + NADPH + (n+1) H(+)(in) = a plastoquinol + NADP(+) + n H(+)(out). NDH shuttles electrons from NAD(P)H:plastoquinone, via FMN and iron-sulfur (Fe-S) centers, to quinones in the photosynthetic chain and possibly in a chloroplast respiratory chain. The immediate electron acceptor for the enzyme in this species is believed to be plastoquinone. Couples the redox reaction to proton translocation, and thus conserves the redox energy in a proton gradient. This is NAD(P)H-quinone oxidoreductase subunit 4L, chloroplastic from Cycas taitungensis (Prince sago).